A 398-amino-acid polypeptide reads, in one-letter code: Phosphoglycerate kinase (398 aa).

Residues 23 to 25, R38, 61 to 64, R122, and R155 contribute to the substrate site; these read DFN and HMGK. ATP contacts are provided by residues K206, G297, E328, and 354–357; that span reads GGDS.

It belongs to the phosphoglycerate kinase family. Monomer.

Its subcellular location is the cytoplasm. It catalyses the reaction (2R)-3-phosphoglycerate + ATP = (2R)-3-phospho-glyceroyl phosphate + ADP. It functions in the pathway carbohydrate degradation; glycolysis; pyruvate from D-glyceraldehyde 3-phosphate: step 2/5. This Clostridium botulinum (strain Loch Maree / Type A3) protein is Phosphoglycerate kinase.